We begin with the raw amino-acid sequence, 479 residues long: MEKLAAFILVLTLLCAYWQSAEGIREYSYADCTDVKGDSAHRYSGSRCFCYSPGTVIKWKDIWSTFKVNVSSNVDVVVVFPMETINCHHPDDLLTVMNCFVEHYWPSTVQRETSLEIPLVDVDICFMIKSPRSNTEYTLHVSNKRLNRMCFLLFVCGLILFFGARNICRSSLFFYTTGVSLGIIATFVFLTLLLRNFVPKRGLFLVLLGAGSGLSYMGIQRVLNEWDDIVTEHWMELLAYVLISGLFSFAVCYKHGPITNKHTLNFMTCSMQAVGIVLLYYGITFPPAYFVLVAVLLCWKILPLAWSLLMGICSLFYSFLALFRRRRRPTVRLLTEEEYREQGEIHTRASLDELREYCNRPGFPAWETVLRLRSPQRFAEFLRQGSHITQEEHQNHENHYGLGGAYYENVIFNNSSSSDTQSHREEAEDNSEDEIVGNSPPVLNNLPSPTIYPPTICPYPPVTYTPQPEPLDPEDQDFF.

An N-terminal signal peptide occupies residues 1-23; sequence MEKLAAFILVLTLLCAYWQSAEG. N-linked (GlcNAc...) asparagine glycosylation occurs at Asn-69. 5 helical membrane-spanning segments follow: residues 172-192, 203-223, 233-253, 276-296, and 301-321; these read LFFY…FLTL, LFLV…QRVL, HWME…AVCY, IVLL…VAVL, and ILPL…SFLA. The N-linked (GlcNAc...) asparagine glycan is linked to Asn-414. Positions 414-479 are disordered; sequence NSSSSDTQSH…PLDPEDQDFF (66 aa). Residues 438–449 show a composition bias toward low complexity; the sequence is NSPPVLNNLPSP. A compositionally biased stretch (pro residues) spans 450–470; the sequence is TIYPPTICPYPPVTYTPQPEP.

This sequence belongs to the NEMP family.

The protein resides in the nucleus inner membrane. Contributes to nuclear envelope stiffness in germ cells. Involved in male and female fertility. In Danio rerio (Zebrafish), this protein is Nuclear envelope integral membrane protein 2.